Here is a 472-residue protein sequence, read N- to C-terminus: Serine/threonine-protein phosphatase T (472 aa).

3 TPR repeats span residues 7–40 (ADKL…TKTP), 41–73 (TLFC…EPTF), and 74–107 (AKAY…APQN). Residues D217, H219, D246, and N278 each coordinate Mn(2+). Residue H279 is the Proton donor/acceptor of the active site. 2 residues coordinate Mn(2+): H327 and H403.

The protein belongs to the PPP phosphatase family. PP-5 (PP-T) subfamily. The cofactor is Mg(2+). Mn(2+) serves as cofactor.

Its subcellular location is the cytoplasm. The protein resides in the cytosol. It localises to the nucleus. It carries out the reaction O-phospho-L-seryl-[protein] + H2O = L-seryl-[protein] + phosphate. It catalyses the reaction O-phospho-L-threonyl-[protein] + H2O = L-threonyl-[protein] + phosphate. Activated by arachidonic acid. Functionally, may function as a protein phosphatase. The polypeptide is Serine/threonine-protein phosphatase T (Trypanosoma brucei brucei (strain 927/4 GUTat10.1)).